A 208-amino-acid chain; its full sequence is CD209 antigen-like protein E (208 aa).

Residues 1 to 16 lie on the Cytoplasmic side of the membrane; the sequence is MRAPQMGSLGFLDKGH. The chain crosses the membrane as a helical; Signal-anchor for type II membrane protein span at residues 17–37; sequence IPLVLQLLFLILFTGLLVAII. At 38 to 208 the chain is on the extracellular side; sequence IQVSKMPSSE…KIATTCLSKW (171 aa). 3 disulfide bridges follow: C77–C88, C105–C197, and C176–C189. A C-type lectin domain is found at 83 to 198; it reads FFNGNCYFFS…CEQRKFWICK (116 aa).

Its subcellular location is the membrane. Putative pathogen-recognition receptor. May mediate the endocytosis of pathogens which are subsequently degraded in lysosomal compartments. The chain is CD209 antigen-like protein E (Cd209e) from Mus musculus (Mouse).